The sequence spans 154 residues: Ecotin-like protein 2 (154 aa).

Belongs to the protease inhibitor I11 (ecotin) family.

The polypeptide is Ecotin-like protein 2 (Leishmania braziliensis).